We begin with the raw amino-acid sequence, 264 residues long: Glutamate racemase (264 aa).

Residues 9 to 10 and 41 to 42 contribute to the substrate site; these read DS and YG. Cys72 serves as the catalytic Proton donor/acceptor. 73–74 is a substrate binding site; the sequence is NT. Residue Cys183 is the Proton donor/acceptor of the active site. 184 to 185 is a substrate binding site; sequence TH.

It belongs to the aspartate/glutamate racemases family.

The catalysed reaction is L-glutamate = D-glutamate. It participates in cell wall biogenesis; peptidoglycan biosynthesis. Functionally, provides the (R)-glutamate required for cell wall biosynthesis. The polypeptide is Glutamate racemase (Geobacillus sp. (strain WCH70)).